A 309-amino-acid chain; its full sequence is HPr kinase/phosphorylase (309 aa).

Residues histidine 138 and lysine 159 contribute to the active site. 153-160 contributes to the ATP binding site; sequence GQSGVGKS. Residue serine 160 participates in Mg(2+) binding. The Proton acceptor; for phosphorylation activity. Proton donor; for dephosphorylation activity role is filled by aspartate 177. An important for the catalytic mechanism of both phosphorylation and dephosphorylation region spans residues 201 to 210; it reads LEIRGLGIIN. Glutamate 202 lines the Mg(2+) pocket. Arginine 243 is an active-site residue. Positions 264 to 269 are important for the catalytic mechanism of dephosphorylation; sequence PVRPGR.

It belongs to the HPrK/P family. Homohexamer. Requires Mg(2+) as cofactor.

The enzyme catalyses [HPr protein]-L-serine + ATP = [HPr protein]-O-phospho-L-serine + ADP + H(+). The catalysed reaction is [HPr protein]-O-phospho-L-serine + phosphate + H(+) = [HPr protein]-L-serine + diphosphate. In terms of biological role, catalyzes the ATP- as well as the pyrophosphate-dependent phosphorylation of a specific serine residue in HPr, a phosphocarrier protein of the phosphoenolpyruvate-dependent sugar phosphotransferase system (PTS). HprK/P also catalyzes the pyrophosphate-producing, inorganic phosphate-dependent dephosphorylation (phosphorolysis) of seryl-phosphorylated HPr (P-Ser-HPr). The two antagonistic activities of HprK/P are regulated by several intracellular metabolites, which change their concentration in response to the absence or presence of rapidly metabolisable carbon sources (glucose, fructose, etc.) in the growth medium. Also phosphorylates/dephosphorylates the HPr-like catabolite repression protein crh on a specific serine residue. Therefore, by controlling the phosphorylation state of HPr and crh, HPrK/P is a sensor enzyme that plays a major role in the regulation of carbon metabolism and sugar transport: it mediates carbon catabolite repression (CCR), and regulates PTS-catalyzed carbohydrate uptake and inducer exclusion. This is HPr kinase/phosphorylase from Bacillus cytotoxicus (strain DSM 22905 / CIP 110041 / 391-98 / NVH 391-98).